Consider the following 295-residue polypeptide: Proline-rich protein 18 (295 aa).

Pro residues predominate over residues 1 to 13; the sequence is MPFPPMPPPPAPA. The tract at residues 1-133 is disordered; that stretch reads MPFPPMPPPP…GAGPCPDSAA (133 aa). Low complexity predominate over residues 14-29; sequence PGAQAARQLPRRPCAA. Phosphoserine is present on S47. R83 carries the post-translational modification Omega-N-methylarginine. Low complexity predominate over residues 103-126; that stretch reads ARTTYAATSAGTGTTAAGTSSGAG. Residue R172 is modified to Asymmetric dimethylarginine. Residues 181–192 show a composition bias toward low complexity; the sequence is ARAAGPRRGGPA. The interval 181 to 227 is disordered; that stretch reads ARAAGPRRGGPASDPDAPPTAGQGRRAPPPGAQLLHGGLQVPQLSPR. Residue R188 is modified to Omega-N-methylarginine.

The polypeptide is Proline-rich protein 18 (PRR18) (Homo sapiens (Human)).